Here is a 29-residue protein sequence, read N- to C-terminus: 28 kDa protein (29 aa).

The protein is 28 kDa protein of Tritrichomonas foetus (Trichomonas foetus).